The sequence spans 395 residues: Protein HIGH CHLOROPHYLL FLUORESCENCE PHENOTYPE 244, chloroplastic (395 aa).

The N-terminal 64 residues, methionine 1–cysteine 64, are a transit peptide targeting the chloroplast.

This sequence belongs to the NmrA-type oxidoreductase family. As to quaternary structure, component of a high molecular weight complex containing OHP1, OHP2 and HCF244, and PSII core proteins D1/D2, HCF136 and HCF173. Interacts with OHP1. Forms a trimeric complex with OHP1 and OHP2 that mutually stabilizes each subunit.

It localises to the plastid. The protein localises to the chloroplast stroma. The protein resides in the chloroplast thylakoid membrane. Its function is as follows. Auxiliary factor required, together with HCF173, for the biogenesis of photosystem II (PSII), especially for the synthesis of the reaction center proteins (e.g. D1), via the regulation of the corresponding mRNA (e.g. psbA) translation initiation (ribosomal loading) and stabilization. Forms a trimeric complex with OHP1 and OHP2 that is required to promote PSII core subunit assembly. The trimeric complex forms a transient PSII reaction center-like complex with PsbA, PsbD, PsbE, PsbF and PsbI subunits in thylakoids for early assembly of PSII as well as PSII repair. The trimeric complex is required for the recruitment of ribosomes to the psbA mRNA during PSII biogenesis and repair. The polypeptide is Protein HIGH CHLOROPHYLL FLUORESCENCE PHENOTYPE 244, chloroplastic (Arabidopsis thaliana (Mouse-ear cress)).